The chain runs to 259 residues: Type III pantothenate kinase (259 aa).

6-13 (DTGNTNTV) lines the ATP pocket. 107–110 (GPDR) is a substrate binding site. D109 acts as the Proton acceptor in catalysis. Position 129 (D129) interacts with K(+). T132 is an ATP binding site. A substrate-binding site is contributed by T184.

This sequence belongs to the type III pantothenate kinase family. In terms of assembly, homodimer. NH4(+) is required as a cofactor. It depends on K(+) as a cofactor.

Its subcellular location is the cytoplasm. It catalyses the reaction (R)-pantothenate + ATP = (R)-4'-phosphopantothenate + ADP + H(+). It participates in cofactor biosynthesis; coenzyme A biosynthesis; CoA from (R)-pantothenate: step 1/5. In terms of biological role, catalyzes the phosphorylation of pantothenate (Pan), the first step in CoA biosynthesis. The protein is Type III pantothenate kinase of Paracoccus denitrificans (strain Pd 1222).